A 375-amino-acid polypeptide reads, in one-letter code: 23S rRNA (uracil(747)-C(5))-methyltransferase RlmC (375 aa).

C3, C11, C14, and C87 together coordinate [4Fe-4S] cluster. 4 residues coordinate S-adenosyl-L-methionine: Q212, F241, E262, and N307. C334 functions as the Nucleophile in the catalytic mechanism.

It belongs to the class I-like SAM-binding methyltransferase superfamily. RNA M5U methyltransferase family. RlmC subfamily.

It catalyses the reaction uridine(747) in 23S rRNA + S-adenosyl-L-methionine = 5-methyluridine(747) in 23S rRNA + S-adenosyl-L-homocysteine + H(+). Functionally, catalyzes the formation of 5-methyl-uridine at position 747 (m5U747) in 23S rRNA. The sequence is that of 23S rRNA (uracil(747)-C(5))-methyltransferase RlmC from Serratia proteamaculans (strain 568).